We begin with the raw amino-acid sequence, 323 residues long: Acetyl esterase (323 aa).

An Involved in the stabilization of the negatively charged intermediate by the formation of the oxyanion hole motif is present at residues 91–93 (HGG). Catalysis depends on residues Ser-165, Asp-262, and His-292.

Belongs to the 'GDXG' lipolytic enzyme family. In terms of assembly, homodimer. Interacts with MalT and MelA.

It localises to the cytoplasm. Displays esterase activity towards short chain fatty esters (acyl chain length of up to 8 carbons). Able to hydrolyze triacetylglycerol (triacetin) and tributyrylglycerol (tributyrin), but not trioleylglycerol (triolein) or cholesterol oleate. Negatively regulates MalT activity by antagonizing maltotriose binding. Inhibits MelA galactosidase activity. This Salmonella typhi protein is Acetyl esterase.